The chain runs to 638 residues: 1-deoxy-D-xylulose-5-phosphate synthase (638 aa).

Thiamine diphosphate is bound by residues H75 and A116–S118. D147 contacts Mg(2+). Thiamine diphosphate is bound by residues G148 to A149, N177, Y288, and E370. N177 provides a ligand contact to Mg(2+).

It belongs to the transketolase family. DXPS subfamily. As to quaternary structure, homodimer. Mg(2+) is required as a cofactor. Requires thiamine diphosphate as cofactor.

It carries out the reaction D-glyceraldehyde 3-phosphate + pyruvate + H(+) = 1-deoxy-D-xylulose 5-phosphate + CO2. Its pathway is metabolic intermediate biosynthesis; 1-deoxy-D-xylulose 5-phosphate biosynthesis; 1-deoxy-D-xylulose 5-phosphate from D-glyceraldehyde 3-phosphate and pyruvate: step 1/1. Functionally, catalyzes the acyloin condensation reaction between C atoms 2 and 3 of pyruvate and glyceraldehyde 3-phosphate to yield 1-deoxy-D-xylulose-5-phosphate (DXP). This is 1-deoxy-D-xylulose-5-phosphate synthase from Cupriavidus necator (strain ATCC 17699 / DSM 428 / KCTC 22496 / NCIMB 10442 / H16 / Stanier 337) (Ralstonia eutropha).